The following is a 591-amino-acid chain: PDZ and LIM domain protein 5 (591 aa).

Serine 2 is modified (N-acetylserine). Serine 2 is modified (phosphoserine). A PDZ domain is found at 2 to 85; that stretch reads SNYNVSLVGP…SLNMTLQRAS (84 aa). Lysine 89 carries the N6-acetyllysine; alternate modification. N6-succinyllysine; alternate is present on lysine 89. A Glycyl lysine isopeptide (Lys-Gly) (interchain with G-Cter in SUMO2); alternate cross-link involves residue lysine 89. Serine 111, serine 134, and serine 137 each carry phosphoserine. Disordered stretches follow at residues 125 to 240 and 255 to 334; these read YNKV…GPPR and THSD…SNRP. Polar residues predominate over residues 134 to 143; the sequence is SVSSPKVTSI. Low complexity predominate over residues 144 to 161; sequence PSPSSAFTPAHAATSSHA. The span at 162-174 shows a compositional bias: pro residues; sequence SPPPVAAVTPPPL. Polar residues-rich tracts occupy residues 183 to 195 and 207 to 217; these read ANPSAAQCSSPPN and PTVTSVCSESA. Serine 228 and serine 260 each carry phosphoserine. Composition is skewed to basic and acidic residues over residues 258–273 and 293–304; these read DASKKRLIEDTEDWRP and EHLKESENDNAK. Over residues 310–329 the composition is skewed to low complexity; that stretch reads PEPSQQSASPLSAAESLESP. Phosphoserine occurs at positions 313 and 318. Lysine 346 carries the N6-acetyllysine modification. Residues 348 to 398 form a disordered region; sequence VGSTSVKSPSWQRPNQAAPSTGRISNSASSSGTGAPMKPAVGPPQPSDQDT. Polar residues predominate over residues 349–380; that stretch reads GSTSVKSPSWQRPNQAAPSTGRISNSASSSGT. Residues serine 355 and serine 357 each carry the phosphoserine modification. 3 LIM zinc-binding domains span residues 413 to 472, 472 to 531, and 531 to 591; these read PMCA…FFAP, PECG…LFGT, and TICR…SVNF.

As to quaternary structure, interacts with various PKC isoforms through the LIM domains. Interacts with actin and alpha-actinin through the PDZ domain. Interacts (via LIM domains) with SIPA1L1/SPAR; this interaction may occur preferentially with isoform 1. Detected in brain, in neurons, including in hippocampal neurons, and glial cells (at protein level). Detected in heart and skeletal muscle.

The protein localises to the postsynaptic density. The protein resides in the presynapse. It localises to the postsynapse. Its subcellular location is the cytoplasm. It is found in the cytosol. May play an important role in the heart development by scaffolding PKC to the Z-disk region. May play a role in the regulation of cardiomyocyte expansion. Isoforms lacking the LIM domains may negatively modulate the scaffolding activity of isoform 1. Overexpression promotes the development of heart hypertrophy. Contributes to the regulation of dendritic spine morphogenesis in neurons. May be required to restrain postsynaptic growth of excitatory synapses. Isoform 1, but not isoform 2, expression favors spine thinning and elongation. This is PDZ and LIM domain protein 5 (Pdlim5) from Rattus norvegicus (Rat).